Here is a 545-residue protein sequence, read N- to C-terminus: CTP synthase (545 aa).

Residues 2–266 (TTNYIFVTGG…DDYICKRFSL (265 aa)) are amidoligase domain. Residue serine 14 coordinates CTP. Serine 14 is a binding site for UTP. Residues 15–20 (SLGKGI) and aspartate 72 contribute to the ATP site. Aspartate 72 and glutamate 140 together coordinate Mg(2+). Residues 147 to 149 (DIE), 187 to 192 (KTKPTQ), and lysine 223 contribute to the CTP site. UTP contacts are provided by residues 187-192 (KTKPTQ) and lysine 223. 239–241 (KDV) contributes to the ATP binding site. Residues 291 to 542 (TIGMVGKYIE…VKAANEHQKR (252 aa)) enclose the Glutamine amidotransferase type-1 domain. Glycine 352 provides a ligand contact to L-glutamine. Catalysis depends on cysteine 379, which acts as the Nucleophile; for glutamine hydrolysis. Residues 380 to 383 (LGMQ), glutamate 403, and arginine 470 each bind L-glutamine. Active-site residues include histidine 515 and glutamate 517.

The protein belongs to the CTP synthase family. As to quaternary structure, homotetramer.

It carries out the reaction UTP + L-glutamine + ATP + H2O = CTP + L-glutamate + ADP + phosphate + 2 H(+). The enzyme catalyses L-glutamine + H2O = L-glutamate + NH4(+). The catalysed reaction is UTP + NH4(+) + ATP = CTP + ADP + phosphate + 2 H(+). Its pathway is pyrimidine metabolism; CTP biosynthesis via de novo pathway; CTP from UDP: step 2/2. Allosterically activated by GTP, when glutamine is the substrate; GTP has no effect on the reaction when ammonia is the substrate. The allosteric effector GTP functions by stabilizing the protein conformation that binds the tetrahedral intermediate(s) formed during glutamine hydrolysis. Inhibited by the product CTP, via allosteric rather than competitive inhibition. Functionally, catalyzes the ATP-dependent amination of UTP to CTP with either L-glutamine or ammonia as the source of nitrogen. Regulates intracellular CTP levels through interactions with the four ribonucleotide triphosphates. This Salmonella typhi protein is CTP synthase.